The chain runs to 409 residues: uncharacterized protein (409 aa).

This is an uncharacterized protein from Mycoplasma genitalium (strain ATCC 33530 / DSM 19775 / NCTC 10195 / G37) (Mycoplasmoides genitalium).